The primary structure comprises 471 residues: 3-isopropylmalate dehydratase large subunit (471 aa).

Residues Cys-347, Cys-407, and Cys-410 each contribute to the [4Fe-4S] cluster site.

Belongs to the aconitase/IPM isomerase family. LeuC type 1 subfamily. Heterodimer of LeuC and LeuD. The cofactor is [4Fe-4S] cluster.

The catalysed reaction is (2R,3S)-3-isopropylmalate = (2S)-2-isopropylmalate. It participates in amino-acid biosynthesis; L-leucine biosynthesis; L-leucine from 3-methyl-2-oxobutanoate: step 2/4. Catalyzes the isomerization between 2-isopropylmalate and 3-isopropylmalate, via the formation of 2-isopropylmaleate. In Granulibacter bethesdensis (strain ATCC BAA-1260 / CGDNIH1), this protein is 3-isopropylmalate dehydratase large subunit.